We begin with the raw amino-acid sequence, 519 residues long: Keratin, type II cytoskeletal 1b (519 aa).

The tract at residues 1–166 (MSRQFSSQSA…DPEIQKIKTQ (166 aa)) is head. An omega-N-methylarginine mark is found at Arg-81 and Arg-95. Positions 167-202 (EREQIKTLNNKFASFIDKVRFLEQQNQVLQTKWELL) are coil 1A. Residues 167–480 (EREQIKTLNN…ELLEGEESRM (314 aa)) enclose the IF rod domain. The segment at 203–221 (QQVNTSTRTSSLEPIFEEF) is linker 1. Positions 222-313 (INQLQRQVDV…YLFDTELSQI (92 aa)) are coil 1B. The segment at 314–337 (QTHVSDTNVILSMDNNRSLDLDSI) is linker 12. Residues 338 to 476 (INAVRTQYEL…ATYRELLEGE (139 aa)) are coil 2. A tail region spans residues 477-519 (ESRMSGALQSQVSIWALPSNEGNDLGERLHDPQSQVPVPKLGC). The tract at residues 499-519 (NDLGERLHDPQSQVPVPKLGC) is disordered.

This sequence belongs to the intermediate filament family. Post-translationally, undergoes deimination of some arginine residues (citrullination).

The polypeptide is Keratin, type II cytoskeletal 1b (Krt77) (Rattus norvegicus (Rat)).